The chain runs to 492 residues: N-succinylglutamate 5-semialdehyde dehydrogenase (492 aa).

220-225 (GSANTG) provides a ligand contact to NAD(+). Catalysis depends on residues glutamate 243 and cysteine 277.

The protein belongs to the aldehyde dehydrogenase family. AstD subfamily.

The catalysed reaction is N-succinyl-L-glutamate 5-semialdehyde + NAD(+) + H2O = N-succinyl-L-glutamate + NADH + 2 H(+). It participates in amino-acid degradation; L-arginine degradation via AST pathway; L-glutamate and succinate from L-arginine: step 4/5. Functionally, catalyzes the NAD-dependent reduction of succinylglutamate semialdehyde into succinylglutamate. The polypeptide is N-succinylglutamate 5-semialdehyde dehydrogenase (Shigella flexneri serotype 5b (strain 8401)).